The sequence spans 94 residues: Putative regulatory protein LEPBI_I0950 (94 aa).

It belongs to the RemA family.

This is Putative regulatory protein LEPBI_I0950 from Leptospira biflexa serovar Patoc (strain Patoc 1 / ATCC 23582 / Paris).